A 316-amino-acid chain; its full sequence is Small ribosomal subunit biogenesis GTPase RsgA (316 aa).

Positions 83–248 (DQYKSKLFAA…LIDSPGFQEF (166 aa)) constitute a CP-type G domain. GTP is bound by residues 131–134 (NKTD) and 185–193 (GQSGMGKST). Zn(2+)-binding residues include Cys-272, Cys-277, His-279, and Cys-285.

The protein belongs to the TRAFAC class YlqF/YawG GTPase family. RsgA subfamily. As to quaternary structure, monomer. Associates with 30S ribosomal subunit, binds 16S rRNA. Zn(2+) is required as a cofactor.

The protein localises to the cytoplasm. One of several proteins that assist in the late maturation steps of the functional core of the 30S ribosomal subunit. Helps release RbfA from mature subunits. May play a role in the assembly of ribosomal proteins into the subunit. Circularly permuted GTPase that catalyzes slow GTP hydrolysis, GTPase activity is stimulated by the 30S ribosomal subunit. This is Small ribosomal subunit biogenesis GTPase RsgA from Paraburkholderia xenovorans (strain LB400).